The sequence spans 231 residues: Uracil-DNA glycosylase (231 aa).

Asp-74 functions as the Proton acceptor in the catalytic mechanism.

The protein belongs to the uracil-DNA glycosylase (UDG) superfamily. UNG family.

The protein resides in the cytoplasm. The catalysed reaction is Hydrolyzes single-stranded DNA or mismatched double-stranded DNA and polynucleotides, releasing free uracil.. In terms of biological role, excises uracil residues from the DNA which can arise as a result of misincorporation of dUMP residues by DNA polymerase or due to deamination of cytosine. This chain is Uracil-DNA glycosylase, found in Campylobacter jejuni subsp. jejuni serotype O:23/36 (strain 81-176).